Consider the following 122-residue polypeptide: MANQEQIIEAIKEMSVLELNDLVKAIEEEFGVTAAAPVAAAGAAAGGDAEAEKTDFDVELTSAGSSKIKVVKAVKEATGLGLKDAKELVDGAPKVIKEALPKEEAEKLKEALEEVGATVELK.

Belongs to the bacterial ribosomal protein bL12 family. As to quaternary structure, homodimer. Part of the ribosomal stalk of the 50S ribosomal subunit. Forms a multimeric L10(L12)X complex, where L10 forms an elongated spine to which 2 to 4 L12 dimers bind in a sequential fashion. Binds GTP-bound translation factors.

In terms of biological role, forms part of the ribosomal stalk which helps the ribosome interact with GTP-bound translation factors. Is thus essential for accurate translation. In Staphylococcus saprophyticus subsp. saprophyticus (strain ATCC 15305 / DSM 20229 / NCIMB 8711 / NCTC 7292 / S-41), this protein is Large ribosomal subunit protein bL12.